The chain runs to 522 residues: Thiamine biosynthetic bifunctional enzyme TH1, chloroplastic (522 aa).

A chloroplast-targeting transit peptide spans 1–36; it reads MNSLGGIRSWPANWRSTTASMTTTESVRKVPQVLTV. 4-amino-2-methyl-5-(diphosphooxymethyl)pyrimidine is bound by residues 345–349 and Asn377; that span reads QLREK. Asp378 and Asp397 together coordinate Mg(2+). Ser416 is a binding site for 4-amino-2-methyl-5-(diphosphooxymethyl)pyrimidine. 2-[(2R,5Z)-2-carboxy-4-methylthiazol-5(2H)-ylidene]ethyl phosphate is bound at residue 442 to 444; sequence TNT. Lys445 serves as a coordination point for 4-amino-2-methyl-5-(diphosphooxymethyl)pyrimidine. Residues Gly472 and 495-496 each bind 2-[(2R,5Z)-2-carboxy-4-methylthiazol-5(2H)-ylidene]ethyl phosphate; that span reads VS.

Belongs to the thiamine-phosphate synthase family. Mg(2+) serves as cofactor.

Its subcellular location is the plastid. The protein resides in the chloroplast. It catalyses the reaction 2-[(2R,5Z)-2-carboxy-4-methylthiazol-5(2H)-ylidene]ethyl phosphate + 4-amino-2-methyl-5-(diphosphooxymethyl)pyrimidine + 2 H(+) = thiamine phosphate + CO2 + diphosphate. The catalysed reaction is 2-(2-carboxy-4-methylthiazol-5-yl)ethyl phosphate + 4-amino-2-methyl-5-(diphosphooxymethyl)pyrimidine + 2 H(+) = thiamine phosphate + CO2 + diphosphate. It carries out the reaction 4-methyl-5-(2-phosphooxyethyl)-thiazole + 4-amino-2-methyl-5-(diphosphooxymethyl)pyrimidine + H(+) = thiamine phosphate + diphosphate. The enzyme catalyses 4-amino-5-hydroxymethyl-2-methylpyrimidine + ATP = 4-amino-2-methyl-5-(phosphooxymethyl)pyrimidine + ADP + H(+). Its pathway is cofactor biosynthesis; thiamine diphosphate biosynthesis; thiamine phosphate from 4-amino-2-methyl-5-diphosphomethylpyrimidine and 4-methyl-5-(2-phosphoethyl)-thiazole: step 1/1. It participates in cofactor biosynthesis; thiamine diphosphate biosynthesis; 4-amino-2-methyl-5-diphosphomethylpyrimidine from 5-amino-1-(5-phospho-D-ribosyl)imidazole: step 2/3. Its function is as follows. Essential for thiamine biosynthesis. Bifunctional enzyme that catalyzes the phosphorylation of hydroxymethylpyrimidine phosphate (HMP-P) to HMP-PP and condenses 4-methyl-5-(beta-hydroxyethyl)thiazole monophosphate (THZ-P) and 2-methyl-4-amino-5-hydroxymethyl pyrimidine pyrophosphate (HMP-PP) to form thiamine monophosphate (TMP). The sequence is that of Thiamine biosynthetic bifunctional enzyme TH1, chloroplastic (TH1) from Arabidopsis thaliana (Mouse-ear cress).